Here is a 450-residue protein sequence, read N- to C-terminus: Exodeoxyribonuclease 7 large subunit (450 aa).

It belongs to the XseA family. As to quaternary structure, heterooligomer composed of large and small subunits.

It localises to the cytoplasm. The enzyme catalyses Exonucleolytic cleavage in either 5'- to 3'- or 3'- to 5'-direction to yield nucleoside 5'-phosphates.. Functionally, bidirectionally degrades single-stranded DNA into large acid-insoluble oligonucleotides, which are then degraded further into small acid-soluble oligonucleotides. The sequence is that of Exodeoxyribonuclease 7 large subunit from Listeria welshimeri serovar 6b (strain ATCC 35897 / DSM 20650 / CCUG 15529 / CIP 8149 / NCTC 11857 / SLCC 5334 / V8).